The primary structure comprises 198 residues: Lipid A 4'-phosphatase (198 aa).

The chain crosses the membrane as a helical span at residues 143–165; it reads AGQHTILQVTIGSLIAWGFAYLF.

It belongs to the lipid A LpxF 4'-phosphatase family.

Its subcellular location is the cell inner membrane. It participates in bacterial outer membrane biogenesis; LPS lipid A biosynthesis. In terms of biological role, removes the 4'-phosphate group from tetra- and hexaacylated lipid A species, has no 1-phosphatase or Kdo hydrolase activity. Absence of the 4'-phosphate group renders the bacteria resistant to host-derived cationic antimicrobial peptides (CAMP), allowing it to camouflage itself from the host innate immune response, and plays a critical role in the long-term colonization of the host's stomach. This is Lipid A 4'-phosphatase from Helicobacter pylori (strain J99 / ATCC 700824) (Campylobacter pylori J99).